We begin with the raw amino-acid sequence, 108 residues long: Envelope small membrane protein (108 aa).

Residues 1-10 (MNLLNKSLEE) are Virion surface-facing. The chain crosses the membrane as a helical span at residues 11 to 31 (NGSFLTALYIIVGFLALYLLG). Topologically, residues 32–108 (RALQAFVQAA…QDAQRDKLYS (77 aa)) are intravirion. The interval 88–108 (NGWNNKNPANFQDAQRDKLYS) is disordered. Residues 89–100 (GWNNKNPANFQD) are compositionally biased toward polar residues.

The protein belongs to the gammacoronaviruses E protein family. Homooligomer. Interacts with the M membrane protein in the budding compartment of the host cell, which is located between endoplasmic reticulum and the Golgi complex. The cytoplasmic tails of both proteins are important for this function. Interacts with Nucleoprotein.

The protein localises to the host Golgi apparatus membrane. Its function is as follows. Plays a central role in virus morphogenesis and assembly. Acts as a viroporin and self-assembles in host membranes forming pentameric protein-lipid pores that allow ion transport. Also plays a role in the induction of apoptosis. This Gallus gallus (Chicken) protein is Envelope small membrane protein.